The chain runs to 347 residues: Eukaryotic translation initiation factor 3 subunit I (347 aa).

6 WD repeats span residues 8–49, 50–89, 146–186, 198–237, 239–278, and 295–336; these read GHER…GTYE, GHNG…CLFT, TFSG…PESG, AHTD…VIKT, ATET…GRFE, and GHFG…SKLY.

The protein belongs to the eIF-3 subunit I family. As to quaternary structure, component of the eukaryotic translation initiation factor 3 (eIF-3) complex.

The protein resides in the cytoplasm. Component of the eukaryotic translation initiation factor 3 (eIF-3) complex, which is involved in protein synthesis of a specialized repertoire of mRNAs and, together with other initiation factors, stimulates binding of mRNA and methionyl-tRNAi to the 40S ribosome. The eIF-3 complex specifically targets and initiates translation of a subset of mRNAs involved in cell proliferation. The polypeptide is Eukaryotic translation initiation factor 3 subunit I (Mycosarcoma maydis (Corn smut fungus)).